A 238-amino-acid polypeptide reads, in one-letter code: Large ribosomal subunit protein uL2 (238 aa).

The disordered stretch occupies residues 198–238 (HPHGGGLHQSVSRPSTVSRNAPPGRKVGHIASRRTGRRGGA). A compositionally biased stretch (polar residues) spans 206-216 (QSVSRPSTVSR). The segment covering 223–238 (KVGHIASRRTGRRGGA) has biased composition (basic residues).

It belongs to the universal ribosomal protein uL2 family. In terms of assembly, part of the 50S ribosomal subunit. Forms a bridge to the 30S subunit in the 70S ribosome.

Functionally, one of the primary rRNA binding proteins. Required for association of the 30S and 50S subunits to form the 70S ribosome, for tRNA binding and peptide bond formation. It has been suggested to have peptidyltransferase activity; this is somewhat controversial. Makes several contacts with the 16S rRNA in the 70S ribosome. The polypeptide is Large ribosomal subunit protein uL2 (Sulfolobus acidocaldarius (strain ATCC 33909 / DSM 639 / JCM 8929 / NBRC 15157 / NCIMB 11770)).